A 718-amino-acid polypeptide reads, in one-letter code: Polyribonucleotide nucleotidyltransferase (718 aa).

2 residues coordinate Mg(2+): Asp487 and Asp493. Positions 554 to 613 constitute a KH domain; that stretch reads PRIETFKIPTDKIREVIGTGGKVIREIVEKTGAKVNIEDDGTVKVASSDGESIKAAIKWI. The region spanning 623–691 is the S1 motif domain; that stretch reads GEIYEGTVVK…DRGKTRLSMR (69 aa). Residues 694-718 form a disordered region; that stretch reads DQETGEDLEAKQKAEGEAPAQATGE.

It belongs to the polyribonucleotide nucleotidyltransferase family. Mg(2+) serves as cofactor.

The protein resides in the cytoplasm. It carries out the reaction RNA(n+1) + phosphate = RNA(n) + a ribonucleoside 5'-diphosphate. Involved in mRNA degradation. Catalyzes the phosphorolysis of single-stranded polyribonucleotides processively in the 3'- to 5'-direction. The polypeptide is Polyribonucleotide nucleotidyltransferase (Rhodopseudomonas palustris (strain HaA2)).